The following is a 229-amino-acid chain: Flagellar brake protein YcgR (229 aa).

The PilZ domain occupies 134–218; it reads QLSLRVLDVS…GERALQRYID (85 aa).

Belongs to the YcgR family. As to quaternary structure, monomer. Interacts with the flagellar basal bodies.

It localises to the bacterial flagellum basal body. In terms of biological role, acts as a flagellar brake, regulating swimming and swarming in a bis-(3'-5') cyclic diguanylic acid (c-di-GMP)-dependent manner. Binds 1 c-di-GMP dimer per subunit. Increasing levels of c-di-GMP lead to decreased motility. This chain is Flagellar brake protein YcgR, found in Methylibium petroleiphilum (strain ATCC BAA-1232 / LMG 22953 / PM1).